The primary structure comprises 1002 residues: Lon protease homolog, mitochondrial (1002 aa).

The region spanning 102-313 is the Lon N-terminal domain; that stretch reads VIALPLPHRP…LTLELVKKEM (212 aa). 468–475 lines the ATP pocket; it reads GPPGVGKT. The 185-residue stretch at 811 to 995 folds into the Lon proteolytic domain; sequence QTPVGVVMGL…NEIFDIAFQS (185 aa). Residues Ser-901 and Lys-944 contribute to the active site.

The protein belongs to the peptidase S16 family. Homohexamer or homoheptamer. Organized in a ring with a central cavity.

Its subcellular location is the mitochondrion matrix. The catalysed reaction is Hydrolysis of proteins in presence of ATP.. In terms of biological role, ATP-dependent serine protease that mediates the selective degradation of misfolded, unassembled or oxidatively damaged polypeptides as well as certain short-lived regulatory proteins in the mitochondrial matrix. May also have a chaperone function in the assembly of inner membrane protein complexes. Participates in the regulation of mitochondrial gene expression and in the maintenance of the integrity of the mitochondrial genome. Binds to mitochondrial DNA in a site-specific manner. In Oryza sativa subsp. indica (Rice), this protein is Lon protease homolog, mitochondrial.